An 85-amino-acid chain; its full sequence is UPF0386 protein RHECIAT_CH0001945 (85 aa).

The protein belongs to the UPF0386 family.

The protein is UPF0386 protein RHECIAT_CH0001945 of Rhizobium etli (strain CIAT 652).